The primary structure comprises 603 residues: Prosaposin receptor GPR37 (603 aa).

An N-terminal signal peptide occupies residues 1-26 (MPAPGAPLSRTSRLLLLLLFKVSVSA). Over 27–255 (ALSFVPEPRN…QESYGAYAVM (229 aa)) the chain is Extracellular. N-linked (GlcNAc...) asparagine glycosylation is present at asparagine 36. A disordered region spans residues 39-232 (CLGESCSPLI…GGPRRGNSTN (194 aa)). Composition is skewed to basic and acidic residues over residues 51–79 (RSRD…EAEV), 145–158 (TSER…RDEI), and 165–175 (HSVKTEPEPRD). N-linked (GlcNAc...) asparagine glycosylation is found at asparagine 212 and asparagine 229. The chain crosses the membrane as a helical span at residues 256-276 (CLSVVIFGTGIIGNLAVMCIV). The Cytoplasmic segment spans residues 277–289 (CHNYYMRSISNSL). A helical transmembrane segment spans residues 290–310 (LANLAFWDFLIIFFCLPLVIF). Residues 311–325 (HELTKKWLLEDFSCK) are Extracellular-facing. A disulfide bond links cysteine 324 and cysteine 409. A helical membrane pass occupies residues 326 to 346 (IVPYIEVASLGVTTFTLCALC). Residues 347–369 (IDRFRAATNVQMYYEMIENCSST) are Cytoplasmic-facing. Residues 370–390 (TAKLAVIWVGALLLALPEVVL) form a helical membrane-spanning segment. The Extracellular portion of the chain corresponds to 391–433 (RQLSKEDLGFSGQAPAERCVIKISPDLPDTIYVLALTYDGARL). A helical transmembrane segment spans residues 434–454 (WWYFGCYFCLPTLFTITCSLV). The Cytoplasmic portion of the chain corresponds to 455–483 (TARKIRKAEKASTRGNKRQIHLESQMNCT). The chain crosses the membrane as a helical span at residues 484–504 (VVALTILYGFCIIPENICNIV). At 505–521 (TAYMATGVSQQTMDLLN) the chain is on the extracellular side. The helical transmembrane segment at 522-542 (IISQFLLFFKSCVTPVLLFCL) threads the bilayer. The Cytoplasmic segment spans residues 543-603 (CRPFSRAFME…STFASVGTHC (61 aa)).

The protein belongs to the G-protein coupled receptor 1 family. Forms a complex with PRKN, STUB1 and HSP70. The amount of STUB1 in the complex increases during ER stress. STUB1 promotes the dissociation of HSP70 from PRKN, thus facilitating PRKN-mediated GPR37 ubiquitination. Interacts with PACRG. In terms of processing, the N-terminus is cleaved by ADAM10 metalloproteinase; mediating limited proteolysis leading to the release of receptor ectodomain by shedding. In addition, cleaved by FURIN between Arg-53 and Asp-54. Ubiquitinated by PRKN in the presence of UBE2E1 and UBE2L3 in the endoplasmic reticulum. The unfolded form is specifically ubiquitinated by SYVN1, which promotes its proteasomal degradation and prevents neuronal cell death. As to expression, highly expressed in the brain. High levels of expression were seen in fiber tracts such as the corpus callosum, anterior commissure, fornix, internal capsule, cerebral peduncles, and stria terminalis. Additionally, moderate levels of expression were seen in the pyramidal tracts and cerebellar peduncles, as well as in the spinal tract of the trigeminal nerve and the spinal fasciculi.

It is found in the cell projection. The protein localises to the dendrite. It localises to the synapse. Its subcellular location is the cell membrane. The protein resides in the endoplasmic reticulum membrane. In terms of biological role, G-protein-coupled receptor that plays a role in several physiological pathways such as resolution of inflammatory pain and oligodendrocyte differentiation. Acts as a receptor for several ligands including prosaposin, osteocalcin or neuroprotectin D1. Ligand binding induces endocytosis, followed by an ERK phosphorylation cascade. Acts as a receptor for osteocalcin (OCN) to regulate oligodendrocyte differentiation and central nervous system myelination. Mechanistically, plays a negative role in oligodendrocyte differentiation and myelination during development via activation of the ERK1/2 signaling pathway. Therefore, regulates the stability of myelin or resistance of myelin itself to demyelination. Upon activation by neuroprotectin D1 (NPD1), promotes the activation of phagocytosis in macrophages as well as the shift in cytokine release toward an anti-inflammatory profile, and thus helps to reverse inflammatory pain. In addition, the increased macrophage phagocytosis mediates protection against sepsis upon pathogen infection. Additionally, extracellular vesicles derived from efferocyte express prosaposin, which binds to macrophage GPR37 to increase expression of the efferocytosis receptor TIM4 via an ERK-AP1-dependent signaling axis, leading to increased macrophage efferocytosis efficiency and accelerated resolution of inflammation. May also act as a maturation factor of LRP6, protecting LRP6 from the endoplasmic reticulum (ER)-associated protein degradation (ERAD) and thereby promoting the Wnt/beta-catenin signaling pathway. The protein is Prosaposin receptor GPR37 (Gpr37) of Rattus norvegicus (Rat).